Reading from the N-terminus, the 282-residue chain is Heme oxygenase 1, chloroplastic (282 aa).

Residues 1–56 constitute a chloroplast transit peptide; sequence MASATVVSQIQSLYIIKPRLSPPPPPHRQFRSIYFPTTRLLQQHRFRQMKSVVIVP. Heme b is bound at residue His-86.

Belongs to the heme oxygenase family. In terms of tissue distribution, highly expressed in root nodules and, to a lower extent, in leaves, shoots, roots, flowers and pods (at protein level).

It localises to the plastid. Its subcellular location is the chloroplast. It carries out the reaction heme b + 3 reduced [NADPH--hemoprotein reductase] + 3 O2 = biliverdin IXalpha + CO + Fe(2+) + 3 oxidized [NADPH--hemoprotein reductase] + 3 H2O + H(+). Functionally, key enzyme in the synthesis of the chromophore of the phytochrome family of plant photoreceptors. Catalyzes the opening of the heme ring to form the open-chain tetrapyrrole biliverdin IX with the release of iron and carbon monoxide (CO). Produces specifically the biliverdin IX-alpha isomer. Can form complex with heme, is ferredoxin-dependent and its activity is increased in the presence of ascorbate. May affect the plastid-to-nucleus signaling pathway by perturbing tetrapyrrole synthesis. The plastid-to-nucleus signal plays an important role in the coordinated expression of both nuclear- and chloroplast-localized genes that encode photosynthesis-related proteins. Required for efficient symbiotic nitrogen fixation (SNF) in root nodules. Responsible for heme catabolism in uninfected nodule interstitial cells (UC), preventing superoxide production under stressful conditions (e.g. nitrate exposure and darkness) and catalyzing biliverdin (BV) production in senescing green nodules. The polypeptide is Heme oxygenase 1, chloroplastic (Lotus japonicus (Lotus corniculatus var. japonicus)).